Reading from the N-terminus, the 452-residue chain is Cytoplasmic tRNA 2-thiolation protein 2 (452 aa).

The protein belongs to the CTU2/NCS2 family.

The protein resides in the cytoplasm. Its pathway is tRNA modification; 5-methoxycarbonylmethyl-2-thiouridine-tRNA biosynthesis. In terms of biological role, plays a central role in 2-thiolation of mcm(5)S(2)U at tRNA wobble positions of tRNA(Lys), tRNA(Glu) and tRNA(Gln). May act by forming a heterodimer with NCS6 that ligates sulfur from thiocarboxylated URM1 onto the uridine of tRNAs at wobble position. Prior mcm(5) tRNA modification by the elongator complex is required for 2-thiolation. May also be involved in protein urmylation. In Candida albicans (strain SC5314 / ATCC MYA-2876) (Yeast), this protein is Cytoplasmic tRNA 2-thiolation protein 2.